Reading from the N-terminus, the 573-residue chain is Sulfite reductase [NADPH] hemoprotein beta-component (573 aa).

Residues Cys-438, Cys-444, Cys-483, and Cys-487 each contribute to the [4Fe-4S] cluster site. Residue Cys-487 participates in siroheme binding.

Belongs to the nitrite and sulfite reductase 4Fe-4S domain family. Alpha(8)-beta(8). The alpha component is a flavoprotein, the beta component is a hemoprotein. Requires siroheme as cofactor. [4Fe-4S] cluster serves as cofactor.

It carries out the reaction hydrogen sulfide + 3 NADP(+) + 3 H2O = sulfite + 3 NADPH + 4 H(+). It participates in sulfur metabolism; hydrogen sulfide biosynthesis; hydrogen sulfide from sulfite (NADPH route): step 1/1. Its function is as follows. Component of the sulfite reductase complex that catalyzes the 6-electron reduction of sulfite to sulfide. This is one of several activities required for the biosynthesis of L-cysteine from sulfate. This Nitrosomonas europaea (strain ATCC 19718 / CIP 103999 / KCTC 2705 / NBRC 14298) protein is Sulfite reductase [NADPH] hemoprotein beta-component.